The following is a 345-amino-acid chain: MMFPGLLAPPAGYPSLLRPTPTLTLPQSLQSAFSGHSSFLVEDLIRISRPPAYLPRGSVPTPSMSPPRPGAPAALTDTGASDLGSPGPGSRRGGSPQTAVSPASEPTFLKFGVNAILSSAPRTETSPTLLQSVPPKTFAFPYFEGSFQPFIRSSYFPASSSVVPIPGTFSWPLAARGKPRRGMLRRAVFSDVQRKALEKMFQKQKYISKPDRKKLAAKLGLKDSQVKIWFQNRRMKWRNSKERELLSSGGCREQTLPTKLNPHPDLSDVGQKGPGDDDDEEDEGPGSPRPRLVYHAAPADPRHLRDPRLEAPLPTSPARSGSPDKASDFSDSEDDEEGEEEITVS.

2 disordered regions span residues 55-103 and 241-345; these read PRGS…VSPA and KERE…ITVS. The homeobox DNA-binding region spans 182-241; the sequence is GMLRRAVFSDVQRKALEKMFQKQKYISKPDRKKLAAKLGLKDSQVKIWFQNRRMKWRNSK. Residues 300 to 309 show a composition bias toward basic and acidic residues; it reads DPRHLRDPRL. The span at 330-345 shows a compositional bias: acidic residues; the sequence is SDSEDDEEGEEEITVS.

This sequence belongs to the H2.0 homeobox family.

Its subcellular location is the nucleus. Could have a role in patterning the central nervous system during embryogenesis. Has a key role in regulating the distinct phenotypic features that distinguish two major classes of ventral interneurons, V0 and V1 neurons. Regulates the transcription factor profile, neurotransmitter phenotype, intraspinal migratory path and axonal trajectory of V0 neurons, features that differentiate them from an adjacent set of V1 neurons. The chain is Homeobox protein DBX1 (DBX1) from Bos taurus (Bovine).